The following is a 327-amino-acid chain: Undecaprenyl-phosphate 4-deoxy-4-formamido-L-arabinose transferase (327 aa).

Transmembrane regions (helical) follow at residues 235–255 (LLSL…VLLV) and 270–290 (VFTL…GMGL).

This sequence belongs to the glycosyltransferase 2 family.

It is found in the cell inner membrane. It carries out the reaction UDP-4-deoxy-4-formamido-beta-L-arabinose + di-trans,octa-cis-undecaprenyl phosphate = 4-deoxy-4-formamido-alpha-L-arabinopyranosyl di-trans,octa-cis-undecaprenyl phosphate + UDP. It functions in the pathway glycolipid biosynthesis; 4-amino-4-deoxy-alpha-L-arabinose undecaprenyl phosphate biosynthesis; 4-amino-4-deoxy-alpha-L-arabinose undecaprenyl phosphate from UDP-4-deoxy-4-formamido-beta-L-arabinose and undecaprenyl phosphate: step 1/2. Its pathway is bacterial outer membrane biogenesis; lipopolysaccharide biosynthesis. Catalyzes the transfer of 4-deoxy-4-formamido-L-arabinose from UDP to undecaprenyl phosphate. The modified arabinose is attached to lipid A and is required for resistance to polymyxin and cationic antimicrobial peptides. The polypeptide is Undecaprenyl-phosphate 4-deoxy-4-formamido-L-arabinose transferase (Yersinia pestis bv. Antiqua (strain Antiqua)).